The following is a 545-amino-acid chain: Cytochrome P450 10 (545 aa).

Cysteine 493 is a heme binding site.

The protein belongs to the cytochrome P450 family. It depends on heme as a cofactor. As to expression, abundantly expressed in the female gonadotropic hormone producing dorsal bodies.

In terms of biological role, may be involved in the synthesis of the female gonadotropic hormone produced by the dorsal bodies. This is Cytochrome P450 10 (CYP10) from Lymnaea stagnalis (Great pond snail).